Reading from the N-terminus, the 82-residue chain is ATP synthase subunit c, chloroplastic (82 aa).

2 helical membrane-spanning segments follow: residues 4–24 (IISA…AIGP) and 57–77 (LAFM…LLFA).

This sequence belongs to the ATPase C chain family. As to quaternary structure, F-type ATPases have 2 components, F(1) - the catalytic core - and F(0) - the membrane proton channel. F(1) has five subunits: alpha(3), beta(3), gamma(1), delta(1), epsilon(1). F(0) has four main subunits: a(1), b(1), b'(1) and c(10-14). The alpha and beta chains form an alternating ring which encloses part of the gamma chain. F(1) is attached to F(0) by a central stalk formed by the gamma and epsilon chains, while a peripheral stalk is formed by the delta, b and b' chains.

It localises to the plastid. It is found in the chloroplast thylakoid membrane. Its function is as follows. F(1)F(0) ATP synthase produces ATP from ADP in the presence of a proton or sodium gradient. F-type ATPases consist of two structural domains, F(1) containing the extramembraneous catalytic core and F(0) containing the membrane proton channel, linked together by a central stalk and a peripheral stalk. During catalysis, ATP synthesis in the catalytic domain of F(1) is coupled via a rotary mechanism of the central stalk subunits to proton translocation. Functionally, key component of the F(0) channel; it plays a direct role in translocation across the membrane. A homomeric c-ring of between 10-14 subunits forms the central stalk rotor element with the F(1) delta and epsilon subunits. In Antithamnion sp. (Red alga), this protein is ATP synthase subunit c, chloroplastic.